A 96-amino-acid polypeptide reads, in one-letter code: Interleukin-8 (96 aa).

Residues M1–A22 form the signal peptide. Position 27 is a citrulline (R27). Intrachain disulfides connect C34-C61 and C36-C78.

It belongs to the intercrine alpha (chemokine CxC) family. Homodimer. Interacts with TNFAIP6 (via Link domain); this interaction interferes with chemokine binding to glycosaminoglycans. Post-translationally, citrullination at Arg-27 prevents proteolysis, and dampens tissue inflammation, it also enhances leukocytosis, possibly through impaired chemokine clearance from the blood circulation.

It is found in the secreted. Its function is as follows. Chemotactic factor that mediates inflammatory response by attracting neutrophils, basophils, and T-cells to clear pathogens and protect the host from infection. Also plays an important role in neutrophil activation. Released in response to an inflammatory stimulus, exerts its effect by binding to the G-protein-coupled receptors CXCR1 and CXCR2, primarily found in neutrophils, monocytes and endothelial cells. G-protein heterotrimer (alpha, beta, gamma subunits) constitutively binds to CXCR1/CXCR2 receptor and activation by IL8 leads to beta and gamma subunits release from Galpha (GNAI2 in neutrophils) and activation of several downstream signaling pathways including PI3K and MAPK pathways. The chain is Interleukin-8 (CXCL8) from Dasypus novemcinctus (Nine-banded armadillo).